Consider the following 116-residue polypeptide: Toxin CSTX-10 (116 aa).

A signal peptide spans 1 to 20 (MKVLVIFAVLSLVIFSNCSA). Positions 21–47 (ETDEDFFGEESFEADDIIPFIAKEQVR) are excised as a propeptide. 4 disulfide bridges follow: cysteine 53/cysteine 68, cysteine 60/cysteine 77, cysteine 67/cysteine 94, and cysteine 79/cysteine 92.

As to expression, expressed by the venom gland.

It is found in the secreted. The protein localises to the target cell membrane. Its function is as follows. Spider venom toxin that shows calcium channel blocking activity and exhibits cytolytic activity by affecting the outer leaflet curvature and/or pore formation across the membrane. It blocks L-type calcium channels (Cav1/CACNA1) in mammalian neurons at nanomolar concentrations. Furthermore, it produces a slow voltage-independent block of mid/low and high voltage-activated calcium channels in cockroach neurons. Potassium ions, histamine, M-ctenitoxin-Cs1a (AC P83619), CSTX-9 (AC P58604), and CSTX-13 (AC P83919) synergistically increase the insecticidal activity of this toxin. In vivo, it causes paralysis in blow flies and provokes death in drosophila. The polypeptide is Toxin CSTX-10 (Cupiennius salei (American wandering spider)).